The following is a 400-amino-acid chain: Acetate kinase (400 aa).

Asn10 provides a ligand contact to Mg(2+). Lys17 is a binding site for ATP. Residue Arg91 coordinates substrate. Catalysis depends on Asp150, which acts as the Proton donor/acceptor. Residues 210–214 (HLGNG), 285–287 (DCR), and 333–337 (GIGEN) contribute to the ATP site. Glu387 provides a ligand contact to Mg(2+).

This sequence belongs to the acetokinase family. Homodimer. Mg(2+) is required as a cofactor. The cofactor is Mn(2+).

It is found in the cytoplasm. It carries out the reaction acetate + ATP = acetyl phosphate + ADP. It participates in metabolic intermediate biosynthesis; acetyl-CoA biosynthesis; acetyl-CoA from acetate: step 1/2. Functionally, catalyzes the formation of acetyl phosphate from acetate and ATP. Can also catalyze the reverse reaction. The sequence is that of Acetate kinase from Salmonella typhi.